Here is a 121-residue protein sequence, read N- to C-terminus: MLKEFKNFILRGNVLDLAVGVIIGAAFTALVKSLVDNLINPLIGMFVQSSALAHLSVTVGKTKFTYGAFLNDVINFVITAFVIFVLIKFINKLFPKKEEIVEEQKNEELETLQEIRDLLKK.

The next 2 helical transmembrane spans lie at 14 to 34 (VLDLAVGVIIGAAFTALVKSL) and 67 to 87 (GAFLNDVINFVITAFVIFVLI).

It belongs to the MscL family. In terms of assembly, homopentamer.

Its subcellular location is the cell membrane. In terms of biological role, channel that opens in response to stretch forces in the membrane lipid bilayer. May participate in the regulation of osmotic pressure changes within the cell. This Lactococcus lactis subsp. cremoris (strain SK11) protein is Large-conductance mechanosensitive channel.